Reading from the N-terminus, the 364-residue chain is Probable dual-specificity RNA methyltransferase RlmN (364 aa).

The active-site Proton acceptor is the glutamate 106. The region spanning 112-350 is the Radical SAM core domain; that stretch reads YPQRNTVCIS…SCTVRDTRGR (239 aa). A disulfide bridge links cysteine 119 with cysteine 356. 3 residues coordinate [4Fe-4S] cluster: cysteine 126, cysteine 130, and cysteine 133. S-adenosyl-L-methionine contacts are provided by residues 177 to 178, serine 211, 234 to 236, and asparagine 313; these read GE and SLH. Cysteine 356 serves as the catalytic S-methylcysteine intermediate.

Belongs to the radical SAM superfamily. RlmN family. Requires [4Fe-4S] cluster as cofactor.

The protein localises to the cytoplasm. The enzyme catalyses adenosine(2503) in 23S rRNA + 2 reduced [2Fe-2S]-[ferredoxin] + 2 S-adenosyl-L-methionine = 2-methyladenosine(2503) in 23S rRNA + 5'-deoxyadenosine + L-methionine + 2 oxidized [2Fe-2S]-[ferredoxin] + S-adenosyl-L-homocysteine. The catalysed reaction is adenosine(37) in tRNA + 2 reduced [2Fe-2S]-[ferredoxin] + 2 S-adenosyl-L-methionine = 2-methyladenosine(37) in tRNA + 5'-deoxyadenosine + L-methionine + 2 oxidized [2Fe-2S]-[ferredoxin] + S-adenosyl-L-homocysteine. Specifically methylates position 2 of adenine 2503 in 23S rRNA and position 2 of adenine 37 in tRNAs. In Mycobacterium marinum (strain ATCC BAA-535 / M), this protein is Probable dual-specificity RNA methyltransferase RlmN.